The following is a 68-amino-acid chain: Conotoxin Cal12.1p1 (68 aa).

A propeptide spanning residues Asp1–Thr23 is cleaved from the precursor.

Post-translationally, contains 4 disulfide bonds. In terms of tissue distribution, expressed by the venom duct.

The protein localises to the secreted. In Californiconus californicus (California cone), this protein is Conotoxin Cal12.1p1.